The primary structure comprises 345 residues: S-adenosylmethionine:tRNA ribosyltransferase-isomerase (345 aa).

This sequence belongs to the QueA family. Monomer.

It is found in the cytoplasm. It catalyses the reaction 7-aminomethyl-7-carbaguanosine(34) in tRNA + S-adenosyl-L-methionine = epoxyqueuosine(34) in tRNA + adenine + L-methionine + 2 H(+). It participates in tRNA modification; tRNA-queuosine biosynthesis. In terms of biological role, transfers and isomerizes the ribose moiety from AdoMet to the 7-aminomethyl group of 7-deazaguanine (preQ1-tRNA) to give epoxyqueuosine (oQ-tRNA). This is S-adenosylmethionine:tRNA ribosyltransferase-isomerase from Shewanella sp. (strain W3-18-1).